The following is a 2110-amino-acid chain: Protein Ycf2 (2110 aa).

1336–1343 is an ATP binding site; it reads GSIGTGRS. The segment at 1852 to 1876 is disordered; the sequence is EEEAELQDEEAELQDEGAGRKDEEA. Acidic residues predominate over residues 1854–1866; it reads EAELQDEEAELQD.

Belongs to the Ycf2 family.

Its subcellular location is the plastid. It is found in the chloroplast stroma. Its function is as follows. Probable ATPase of unknown function. Its presence in a non-photosynthetic plant (Epifagus virginiana) and experiments in tobacco indicate that it has an essential function which is probably not related to photosynthesis. The chain is Protein Ycf2 (ycf2-A) from Pelargonium hortorum (Common geranium).